We begin with the raw amino-acid sequence, 132 residues long: MVMTDPIADMLTRIRNANMVRHEKLEVPASKIKKEIAELLKREGFIRDVEYIEDNKQGILRIFLKYGANNERVITGLKRISKPGLRVYAKADEVPRVLNGLGIALLSTSKGVMTDKDARQLQTGGEVVAYVW.

Belongs to the universal ribosomal protein uS8 family. In terms of assembly, part of the 30S ribosomal subunit. Contacts proteins S5 and S12.

In terms of biological role, one of the primary rRNA binding proteins, it binds directly to 16S rRNA central domain where it helps coordinate assembly of the platform of the 30S subunit. The sequence is that of Small ribosomal subunit protein uS8 from Bacillus cytotoxicus (strain DSM 22905 / CIP 110041 / 391-98 / NVH 391-98).